Reading from the N-terminus, the 815-residue chain is Probable AMP deaminase (815 aa).

The helical transmembrane segment at 5–27 (YALHLAVATLLGASFAAASAYYM) threads the bilayer. Disordered stretches follow at residues 53–116 (LLDA…PVPT) and 144–173 (LLTN…STNM). Over residues 105-116 (VRPTTPRSPVPT) the composition is skewed to low complexity. The span at 159-173 (ASQNGDTKPVPSTNM) shows a compositional bias: polar residues. His-367 and His-369 together coordinate Zn(2+). Substrate-binding positions include His-369 and 438-443 (KFNLKY). His-635 contributes to the Zn(2+) binding site. Glu-638 provides a ligand contact to substrate. His-657 serves as the catalytic Proton acceptor. Asp-712 is a Zn(2+) binding site. 713-716 (DPLQ) provides a ligand contact to substrate.

The protein belongs to the metallo-dependent hydrolases superfamily. Adenosine and AMP deaminases family. Homodimer. Zn(2+) serves as cofactor.

The protein localises to the membrane. The enzyme catalyses AMP + H2O + H(+) = IMP + NH4(+). The protein operates within purine metabolism; IMP biosynthesis via salvage pathway; IMP from AMP: step 1/1. Functionally, AMP deaminase plays a critical role in energy metabolism. In Oryza sativa subsp. japonica (Rice), this protein is Probable AMP deaminase (AMPD).